A 508-amino-acid polypeptide reads, in one-letter code: MKLAYWMYAGPAHIGTLRIASSFKNVHAIMHAPLGDDYFNVMRSMLERERDFTPVTASVVDRNVLARGSQEKVVDNIVRKDQEETPDLIVLTPTCTSSILQEDLQNFVDRAQMDAKGDVMLADVNHYRVNELQAADRTLQQIVQYYLEKGRKKGELPTGKTEKPSVNIIGMTTLGFHNQHDCTELKRLMADLGIEVNEVIPEGASVQNLKNLPRAWFNLVPYREVGLMAARYLEQEFSMPYVDITPMGVVETARCIRKMGQLLNQQGANVDYEEFINQQTLYVSQAAWFSRSIDCQNLTGKKAVVFGDNTHAAAMTRILAREMGIHVVLAGTYCKYDADWFKEQVREYCDEILISEDHGEIADAIARIEPSAIFGTQMERHVGKRLDIPCGVIAAPIHIQNFPIGYKPFLGYEGTNQIADLVYNSFTLGMEDHLLEIFGGHDTKEVITKSVSADSDLNWNKEAQTELNKVPGFVRGKVKRNTEKFARERGFSEITLEVMYAAKEAVGA.

D36 lines the [4Fe-4S] cluster pocket. D294 (proton donor) is an active-site residue. Residue 429-430 (GM) coordinates substrate.

Belongs to the ChlB/BchB/BchZ family. As to quaternary structure, protochlorophyllide reductase is composed of three subunits; ChlL, ChlN and ChlB. Forms a heterotetramer of two ChlB and two ChlN subunits. [4Fe-4S] cluster is required as a cofactor.

It carries out the reaction chlorophyllide a + oxidized 2[4Fe-4S]-[ferredoxin] + 2 ADP + 2 phosphate = protochlorophyllide a + reduced 2[4Fe-4S]-[ferredoxin] + 2 ATP + 2 H2O. It functions in the pathway porphyrin-containing compound metabolism; chlorophyll biosynthesis (light-independent). Component of the dark-operative protochlorophyllide reductase (DPOR) that uses Mg-ATP and reduced ferredoxin to reduce ring D of protochlorophyllide (Pchlide) to form chlorophyllide a (Chlide). This reaction is light-independent. The NB-protein (ChlN-ChlB) is the catalytic component of the complex. The protein is Light-independent protochlorophyllide reductase subunit B of Gloeothece citriformis (strain PCC 7424) (Cyanothece sp. (strain PCC 7424)).